The chain runs to 361 residues: Phosphoserine aminotransferase (361 aa).

Arg42 is a binding site for L-glutamate. Pyridoxal 5'-phosphate contacts are provided by residues 76–77, Trp102, Thr152, Asp172, and Gln195; that span reads AT. At Lys196 the chain carries N6-(pyridoxal phosphate)lysine. 237-238 contributes to the pyridoxal 5'-phosphate binding site; sequence NT.

This sequence belongs to the class-V pyridoxal-phosphate-dependent aminotransferase family. SerC subfamily. As to quaternary structure, homodimer. Requires pyridoxal 5'-phosphate as cofactor.

Its subcellular location is the cytoplasm. It catalyses the reaction O-phospho-L-serine + 2-oxoglutarate = 3-phosphooxypyruvate + L-glutamate. It carries out the reaction 4-(phosphooxy)-L-threonine + 2-oxoglutarate = (R)-3-hydroxy-2-oxo-4-phosphooxybutanoate + L-glutamate. It functions in the pathway amino-acid biosynthesis; L-serine biosynthesis; L-serine from 3-phospho-D-glycerate: step 2/3. The protein operates within cofactor biosynthesis; pyridoxine 5'-phosphate biosynthesis; pyridoxine 5'-phosphate from D-erythrose 4-phosphate: step 3/5. Catalyzes the reversible conversion of 3-phosphohydroxypyruvate to phosphoserine and of 3-hydroxy-2-oxo-4-phosphonooxybutanoate to phosphohydroxythreonine. The protein is Phosphoserine aminotransferase of Xanthomonas campestris pv. campestris (strain 8004).